The primary structure comprises 508 residues: Pancreatic alpha-amylase (508 aa).

The N-terminal stretch at 1–15 is a signal peptide; that stretch reads MKFVLLLSLIGFCWA. A Pyrrolidone carboxylic acid modification is found at Gln-16. 3 disulfide bridges follow: Cys-43–Cys-101, Cys-85–Cys-130, and Cys-156–Cys-172. Ca(2+)-binding residues include Asn-115, Arg-170, and Asp-179. Residue Arg-207 participates in chloride binding. Asp-209 (nucleophile) is an active-site residue. His-213 is a binding site for Ca(2+). The active-site Proton donor is Glu-245. Chloride-binding residues include Asn-310 and Arg-349. Disulfide bonds link Cys-390–Cys-396 and Cys-462–Cys-474.

It belongs to the glycosyl hydrolase 13 family. Monomer. Ca(2+) is required as a cofactor. The cofactor is chloride.

It localises to the secreted. It is found in the extracellular space. It carries out the reaction Endohydrolysis of (1-&gt;4)-alpha-D-glucosidic linkages in polysaccharides containing three or more (1-&gt;4)-alpha-linked D-glucose units.. The polypeptide is Pancreatic alpha-amylase (Amy2) (Rattus norvegicus (Rat)).